We begin with the raw amino-acid sequence, 352 residues long: Histidine biosynthesis bifunctional protein HisB (352 aa).

The segment at 1 to 163 is histidinol-phosphatase; sequence MKKILFIDRD…MVASAIINDA (163 aa). The active-site Nucleophile is the Asp-8. Residues Asp-8 and Asp-10 each coordinate Mg(2+). The active-site Proton donor is the Asp-10. Residues Cys-91, His-93, Cys-99, and Cys-101 each coordinate Zn(2+). Asp-128 lines the Mg(2+) pocket. The tract at residues 164 to 352 is imidazoleglycerol-phosphate dehydratase; sequence RKASVQRKTK…NYLPSTKGVL (189 aa).

In the N-terminal section; belongs to the histidinol-phosphatase family. This sequence in the C-terminal section; belongs to the imidazoleglycerol-phosphate dehydratase family. Mg(2+) serves as cofactor. Requires Zn(2+) as cofactor.

The protein resides in the cytoplasm. The enzyme catalyses D-erythro-1-(imidazol-4-yl)glycerol 3-phosphate = 3-(imidazol-4-yl)-2-oxopropyl phosphate + H2O. It carries out the reaction L-histidinol phosphate + H2O = L-histidinol + phosphate. It functions in the pathway amino-acid biosynthesis; L-histidine biosynthesis; L-histidine from 5-phospho-alpha-D-ribose 1-diphosphate: step 6/9. Its pathway is amino-acid biosynthesis; L-histidine biosynthesis; L-histidine from 5-phospho-alpha-D-ribose 1-diphosphate: step 8/9. This is Histidine biosynthesis bifunctional protein HisB from Legionella pneumophila (strain Lens).